The primary structure comprises 203 residues: E3 ubiquitin-protein ligase rnf152-A (203 aa).

The segment at 12 to 55 (CQICFNYYSPRRRPKLLDCKRTCCSVCLQQMRACQKDLRCPWCR) adopts an RING-type; degenerate zinc-finger fold. The helical transmembrane segment at 167–187 (SGICTVILVACVLVFLLGIVL) threads the bilayer.

Belongs to the RNF152 family.

The protein resides in the lysosome membrane. It catalyses the reaction S-ubiquitinyl-[E2 ubiquitin-conjugating enzyme]-L-cysteine + [acceptor protein]-L-lysine = [E2 ubiquitin-conjugating enzyme]-L-cysteine + N(6)-ubiquitinyl-[acceptor protein]-L-lysine.. Its pathway is protein modification; protein ubiquitination. In terms of biological role, E3 ubiquitin-protein ligase that acts as a negative regulator of mTORC1 signaling by mediating ubiquitination of RagA/RRAGA and RHEB. Catalyzes 'Lys-63'-linked polyubiquitination of RagA/RRAGA in response to amino acid starvation, thereby regulating mTORC1 signaling. Also mediates monoubiquitination of RHEB, promoting its association with the TSC-TBC complex and subsequent inhibition. Also mediates 'Lys-48'-linked polyubiquitination of target proteins and their subsequent targeting to the proteasome for degradation. The sequence is that of E3 ubiquitin-protein ligase rnf152-A from Xenopus laevis (African clawed frog).